The chain runs to 475 residues: Ribulose bisphosphate carboxylase large chain (475 aa).

Residues 1-2 (MS) constitute a propeptide that is removed on maturation. Position 3 is an N-acetylproline (Pro-3). N6,N6,N6-trimethyllysine is present on Lys-14. Residues Asn-123 and Thr-173 each contribute to the substrate site. The active-site Proton acceptor is the Lys-175. Lys-177 is a binding site for substrate. 3 residues coordinate Mg(2+): Lys-201, Asp-203, and Glu-204. Lys-201 bears the N6-carboxylysine mark. The active-site Proton acceptor is the His-294. 3 residues coordinate substrate: Arg-295, His-327, and Ser-379.

The protein belongs to the RuBisCO large chain family. Type I subfamily. As to quaternary structure, heterohexadecamer of 8 large chains and 8 small chains; disulfide-linked. The disulfide link is formed within the large subunit homodimers. The cofactor is Mg(2+). Post-translationally, the disulfide bond which can form in the large chain dimeric partners within the hexadecamer appears to be associated with oxidative stress and protein turnover.

It is found in the plastid. Its subcellular location is the chloroplast. The catalysed reaction is 2 (2R)-3-phosphoglycerate + 2 H(+) = D-ribulose 1,5-bisphosphate + CO2 + H2O. The enzyme catalyses D-ribulose 1,5-bisphosphate + O2 = 2-phosphoglycolate + (2R)-3-phosphoglycerate + 2 H(+). Its function is as follows. RuBisCO catalyzes two reactions: the carboxylation of D-ribulose 1,5-bisphosphate, the primary event in carbon dioxide fixation, as well as the oxidative fragmentation of the pentose substrate in the photorespiration process. Both reactions occur simultaneously and in competition at the same active site. This Psilotum nudum (Whisk fern) protein is Ribulose bisphosphate carboxylase large chain.